The chain runs to 328 residues: Protein phosphatase 1 regulatory inhibitor subunit PPP1R7 homolog (328 aa).

13 LRR repeats span residues 13-36, 37-59, 61-82, 86-110, 111-130, 131-153, 154-177, 179-196, 197-221, 223-240, 241-264, 266-287, and 289-312; these read IGDS…VELP, PNLI…IAQL, TLKK…PLSH, LSDL…IFTK, LLVY…ISKA, SSTL…IEHL, HNLQ…NFTK, EELW…LCGL, KCIK…CVAL, ELYL…LSAL, VNLR…NLTK, EDLW…AVTG, and KEKL…VAAV.

In terms of assembly, interacts with human protein phosphatase PPP1C.

Inhibitor of protein-phosphatase 1 (PP1). Binds to and inhibits PP1 activity. The sequence is that of Protein phosphatase 1 regulatory inhibitor subunit PPP1R7 homolog from Arabidopsis thaliana (Mouse-ear cress).